The sequence spans 115 residues: Ribonuclease P protein component (115 aa).

The protein belongs to the RnpA family. In terms of assembly, consists of a catalytic RNA component (M1 or rnpB) and a protein subunit.

The enzyme catalyses Endonucleolytic cleavage of RNA, removing 5'-extranucleotides from tRNA precursor.. In terms of biological role, RNaseP catalyzes the removal of the 5'-leader sequence from pre-tRNA to produce the mature 5'-terminus. It can also cleave other RNA substrates such as 4.5S RNA. The protein component plays an auxiliary but essential role in vivo by binding to the 5'-leader sequence and broadening the substrate specificity of the ribozyme. In Blochmanniella pennsylvanica (strain BPEN), this protein is Ribonuclease P protein component.